Reading from the N-terminus, the 929-residue chain is Bifunctional uridylyltransferase/uridylyl-removing enzyme (929 aa).

Residues 1–379 (MSPSRPAADE…RPAAKRRRVP (379 aa)) form a uridylyltransferase region. The tract at residues 380-735 (ESDDFVIDNN…VGFDEARAVT (356 aa)) is uridylyl-removing. Residues 495–618 (VDEHLIRCVG…VETVEQMKML (124 aa)) form the HD domain. 2 ACT domains span residues 736 to 818 (ELTI…AVAR) and 849 to 929 (VIEV…KPAA).

It belongs to the GlnD family. It depends on Mg(2+) as a cofactor.

The catalysed reaction is [protein-PII]-L-tyrosine + UTP = [protein-PII]-uridylyl-L-tyrosine + diphosphate. It carries out the reaction [protein-PII]-uridylyl-L-tyrosine + H2O = [protein-PII]-L-tyrosine + UMP + H(+). Uridylyltransferase (UTase) activity is inhibited by glutamine, while glutamine activates uridylyl-removing (UR) activity. Modifies, by uridylylation and deuridylylation, the PII regulatory proteins (GlnB and homologs), in response to the nitrogen status of the cell that GlnD senses through the glutamine level. Under low glutamine levels, catalyzes the conversion of the PII proteins and UTP to PII-UMP and PPi, while under higher glutamine levels, GlnD hydrolyzes PII-UMP to PII and UMP (deuridylylation). Thus, controls uridylylation state and activity of the PII proteins, and plays an important role in the regulation of nitrogen fixation and metabolism. In Rhodopseudomonas palustris (strain ATCC BAA-98 / CGA009), this protein is Bifunctional uridylyltransferase/uridylyl-removing enzyme.